The sequence spans 272 residues: Shikimate dehydrogenase (NADP(+)) (272 aa).

Residues 14–16 (SKS) and Thr61 contribute to the shikimate site. The active-site Proton acceptor is Lys65. Position 77 (Glu77) interacts with NADP(+). Residues Asn86 and Asp102 each coordinate shikimate. Residues 126-130 (GAGGA), 149-154 (NRTVSR), and Met213 each bind NADP(+). Tyr215 contributes to the shikimate binding site. Gly237 contributes to the NADP(+) binding site.

This sequence belongs to the shikimate dehydrogenase family. Homodimer.

The catalysed reaction is shikimate + NADP(+) = 3-dehydroshikimate + NADPH + H(+). It functions in the pathway metabolic intermediate biosynthesis; chorismate biosynthesis; chorismate from D-erythrose 4-phosphate and phosphoenolpyruvate: step 4/7. Functionally, involved in the biosynthesis of the chorismate, which leads to the biosynthesis of aromatic amino acids. Catalyzes the reversible NADPH linked reduction of 3-dehydroshikimate (DHSA) to yield shikimate (SA). In Shigella dysenteriae serotype 1 (strain Sd197), this protein is Shikimate dehydrogenase (NADP(+)).